The sequence spans 501 residues: Histidine--tRNA ligase (501 aa).

It belongs to the class-II aminoacyl-tRNA synthetase family. As to quaternary structure, homodimer.

The protein resides in the cytoplasm. It catalyses the reaction tRNA(His) + L-histidine + ATP = L-histidyl-tRNA(His) + AMP + diphosphate + H(+). This is Histidine--tRNA ligase from Methylocella silvestris (strain DSM 15510 / CIP 108128 / LMG 27833 / NCIMB 13906 / BL2).